Consider the following 1116-residue polypeptide: Auxin response factor 21 (1116 aa).

Positions 132–234 (FCKTLTASDT…QLLLGIRRAN (103 aa)) form a DNA-binding region, TF-B3. Residues 763–812 (KTDDVPSTSTSPSTNSNPVLLQSIPSSSKNQSLTTAGKTSQSSVVLGPTI) form a disordered region. Low complexity predominate over residues 768–780 (PSTSTSPSTNSNP). A compositionally biased stretch (polar residues) spans 781 to 806 (VLLQSIPSSSKNQSLTTAGKTSQSSV). The region spanning 998–1082 (RTYTKVHKRG…RCIRILSPQE (85 aa)) is the PB1 domain.

The protein belongs to the ARF family. Homodimers and heterodimers. In terms of tissue distribution, expressed in roots, culms, leaves and young panicles.

It localises to the nucleus. In terms of biological role, auxin response factors (ARFs) are transcriptional factors that bind specifically to the DNA sequence 5'-TGTCTC-3' found in the auxin-responsive promoter elements (AuxREs). The protein is Auxin response factor 21 (ARF21) of Oryza sativa subsp. japonica (Rice).